We begin with the raw amino-acid sequence, 424 residues long: Enolase (424 aa).

Residue Gln-165 participates in (2R)-2-phosphoglycerate binding. Glu-207 serves as the catalytic Proton donor. Residues Asp-244, Glu-283, and Asp-310 each contribute to the Mg(2+) site. 4 residues coordinate (2R)-2-phosphoglycerate: Lys-335, Arg-364, Ser-365, and Lys-386. The active-site Proton acceptor is Lys-335.

Belongs to the enolase family. It depends on Mg(2+) as a cofactor.

It is found in the cytoplasm. The protein localises to the secreted. It localises to the cell surface. The enzyme catalyses (2R)-2-phosphoglycerate = phosphoenolpyruvate + H2O. It functions in the pathway carbohydrate degradation; glycolysis; pyruvate from D-glyceraldehyde 3-phosphate: step 4/5. Functionally, catalyzes the reversible conversion of 2-phosphoglycerate (2-PG) into phosphoenolpyruvate (PEP). It is essential for the degradation of carbohydrates via glycolysis. The protein is Enolase of Chlamydia trachomatis serovar L2 (strain ATCC VR-902B / DSM 19102 / 434/Bu).